Consider the following 1226-residue polypeptide: Chitin synthase IV (1226 aa).

Positions 1 to 205 (MSLPERPGGS…SRKNPATAEQ (205 aa)) are disordered. Residues 49-65 (SVSSYAETISNPHANTE) show a composition bias toward polar residues. A compositionally biased stretch (low complexity) spans 66 to 75 (TLPLSPTHPT). Residues 94–107 (IRPERNRIDKDHRN) show a composition bias toward basic and acidic residues. The span at 134-151 (DVSTEPSGGSQTHGSFAD) shows a compositional bias: polar residues. Basic and acidic residues predominate over residues 163-172 (MSGDDQEKGN). Residues 173–198 (TRVKSRPRRSKSGKITKETRHRKSRK) are compositionally biased toward basic residues. Residues 246–266 (MGLISIILVIMAIVGFLTFGF) traverse the membrane as a helical segment. Residues N381, N421, and N443 are each glycosylated (N-linked (GlcNAc...) asparagine). The helical transmembrane segment at 516 to 536 (ILILSVVGTRFVLALIFQWFI) threads the bilayer. The disordered stretch occupies residues 572–671 (LPGDVGSSAM…PGPAGFIHDS (100 aa)). Composition is skewed to polar residues over residues 580 to 601 (AMGSSDRTSKRGSSFLPTTSRF) and 618 to 643 (TTMSSQGPASALLNPNSIYRQGNDSR). N640 carries N-linked (GlcNAc...) asparagine glycosylation. Residues 649–666 (PDPYSSAASPSDGPGPAG) show a composition bias toward low complexity. Residues N787 and N1035 are each glycosylated (N-linked (GlcNAc...) asparagine). Transmembrane regions (helical) follow at residues 1060-1080 (FVVFVELVGTLVLPAAIAFTF), 1094-1114 (IIPLVLLALILGLPGLLILVT), and 1118-1138 (WSYVVWMLIYLVSLPIWNFVL).

The protein belongs to the chitin synthase family. Class IV subfamily. Highly expressed in conidia.

Its subcellular location is the cell membrane. The catalysed reaction is [(1-&gt;4)-N-acetyl-beta-D-glucosaminyl](n) + UDP-N-acetyl-alpha-D-glucosamine = [(1-&gt;4)-N-acetyl-beta-D-glucosaminyl](n+1) + UDP + H(+). Its function is as follows. Polymerizes chitin, a structural polymer of the cell wall and septum, by transferring the sugar moiety of UDP-GlcNAc to the non-reducing end of the growing chitin polymer. Contributes to the production of conidia and the ability of fungal conidia to germinate. Involved in fungal stress tolerances. This Metarhizium acridum (strain CQMa 102) protein is Chitin synthase IV.